Here is a 58-residue protein sequence, read N- to C-terminus: Pepsin-1 (58 aa).

Residues 1 to 41 (LLQVPLEKGQSAREYLQEQGLWEQYRLKYPYNPMAKFDPSF) constitute a propeptide, activation peptide.

It belongs to the peptidase A1 family.

The sequence is that of Pepsin-1 from Thunnus orientalis (North Pacific bluefin tuna).